The following is a 435-amino-acid chain: ATP-dependent protease ATPase subunit HslU (435 aa).

Residues isoleucine 18, 60–65 (GVGKTE), aspartate 248, glutamate 313, and arginine 385 each bind ATP.

The protein belongs to the ClpX chaperone family. HslU subfamily. As to quaternary structure, a double ring-shaped homohexamer of HslV is capped on each side by a ring-shaped HslU homohexamer. The assembly of the HslU/HslV complex is dependent on binding of ATP.

Its subcellular location is the cytoplasm. Its function is as follows. ATPase subunit of a proteasome-like degradation complex; this subunit has chaperone activity. The binding of ATP and its subsequent hydrolysis by HslU are essential for unfolding of protein substrates subsequently hydrolyzed by HslV. HslU recognizes the N-terminal part of its protein substrates and unfolds these before they are guided to HslV for hydrolysis. The polypeptide is ATP-dependent protease ATPase subunit HslU (Ruegeria pomeroyi (strain ATCC 700808 / DSM 15171 / DSS-3) (Silicibacter pomeroyi)).